The sequence spans 182 residues: MAEFPSKVSTRTSSPAQGVGASVSAMRPDLGFVRSALGVLALLQLVLGLLVWALIADTPYHLYPAYGWVMFVAVFLWLVTIVFFIIYLFQLHMKLYMVPWPLVLLVFFVAATVLYITAFVACAAAVDLTSLRGSRPYNQRSAASFFACLVMIAYGLSAFFSFQAWRGVGSNAATSQMAGGYS.

A disordered region spans residues 1–20 (MAEFPSKVSTRTSSPAQGVG). Residues 1–35 (MAEFPSKVSTRTSSPAQGVGASVSAMRPDLGFVRS) lie on the Cytoplasmic side of the membrane. Over residues 7 to 16 (KVSTRTSSPA) the composition is skewed to polar residues. Residue Ser-9 is modified to Phosphoserine. Positions 32–166 (FVRSALGVLA…SAFFSFQAWR (135 aa)) constitute an MARVEL domain. The helical transmembrane segment at 36–56 (ALGVLALLQLVLGLLVWALIA) threads the bilayer. Topologically, residues 57-68 (DTPYHLYPAYGW) are extracellular. Residues 69-89 (VMFVAVFLWLVTIVFFIIYLF) form a helical membrane-spanning segment. Over 90-99 (QLHMKLYMVP) the chain is Cytoplasmic. The chain crosses the membrane as a helical span at residues 100–120 (WPLVLLVFFVAATVLYITAFV). The Extracellular portion of the chain corresponds to 121-141 (ACAAAVDLTSLRGSRPYNQRS). A helical membrane pass occupies residues 142-162 (AASFFACLVMIAYGLSAFFSF). At 163–182 (QAWRGVGSNAATSQMAGGYS) the chain is on the cytoplasmic side.

This sequence belongs to the MAL family. Forms oligomers. In terms of processing, phosphorylated. As to expression, detected to the sciatic nerve, brain and kidney. In the sciatic nerve, found in Schwann cells; in the brain, in developing oligodendrocytes, especially of the corpus callosum, of cortical white matter, in the optic nerve and in the stratum radiatum and stratum oriens of the hippocampus. In kidney, segregated to the apical surface of renal tubular epithelia.

It localises to the cell membrane. The protein resides in the myelin membrane. Its subcellular location is the apical cell membrane. Its function is as follows. Main component of the myelin sheath that plays an important role in myelin membrane biogenesis and myelination. Plays an essential function in apical endocytosis. Regulates epithelial development through the regulation of apical endocytosis. Part of the intracellular machinery that mediates basolateral-to-apical transport of ICAM-1, an essential adhesion receptor in epithelial cells, from the subapical compartment in hepatic epithelial cells. The polypeptide is Plasmolipin (Pllp) (Rattus norvegicus (Rat)).